The chain runs to 438 residues: Adenosylhomocysteinase (438 aa).

T61, D137, and E162 together coordinate substrate. 163–165 lines the NAD(+) pocket; the sequence is TTT. Substrate is bound by residues K192 and D196. NAD(+)-binding positions include N197, 226-231, E249, N284, 305-307, and N352; these read GYGDVG and IGH.

This sequence belongs to the adenosylhomocysteinase family. NAD(+) is required as a cofactor.

The protein localises to the cytoplasm. The enzyme catalyses S-adenosyl-L-homocysteine + H2O = L-homocysteine + adenosine. Its pathway is amino-acid biosynthesis; L-homocysteine biosynthesis; L-homocysteine from S-adenosyl-L-homocysteine: step 1/1. Its function is as follows. May play a key role in the regulation of the intracellular concentration of adenosylhomocysteine. The sequence is that of Adenosylhomocysteinase from Flavobacterium johnsoniae (strain ATCC 17061 / DSM 2064 / JCM 8514 / BCRC 14874 / CCUG 350202 / NBRC 14942 / NCIMB 11054 / UW101) (Cytophaga johnsonae).